A 388-amino-acid polypeptide reads, in one-letter code: Flap endonuclease 1 (388 aa).

The segment at 1 to 104 (MGILGLSKLI…GELAKRAERR (104 aa)) is N-domain. Aspartate 34 contributes to the Mg(2+) binding site. Positions 47 and 70 each coordinate DNA. 5 residues coordinate Mg(2+): aspartate 86, glutamate 158, glutamate 160, aspartate 179, and aspartate 181. The tract at residues 122-253 (EIEKFNRRLV…KRAIELINSY (132 aa)) is I-domain. Residue glutamate 158 coordinates DNA. DNA is bound by residues glycine 231 and aspartate 233. Aspartate 233 provides a ligand contact to Mg(2+). An interaction with PCNA region spans residues 336–344 (TQVRLDSFF). A disordered region spans residues 355–388 (AAAKRKAEEAKKSANNKKAKIGGGGGAGRGRRPK).

This sequence belongs to the XPG/RAD2 endonuclease family. FEN1 subfamily. As to quaternary structure, interacts with PCNA. Three molecules of FEN1 bind to one PCNA trimer with each molecule binding to one PCNA monomer. PCNA stimulates the nuclease activity without altering cleavage specificity. Mg(2+) is required as a cofactor. Phosphorylated. Phosphorylation upon DNA damage induces relocalization to the nuclear plasma.

The protein resides in the nucleus. It is found in the nucleolus. The protein localises to the nucleoplasm. Its subcellular location is the mitochondrion. Its function is as follows. Structure-specific nuclease with 5'-flap endonuclease and 5'-3' exonuclease activities involved in DNA replication and repair. During DNA replication, cleaves the 5'-overhanging flap structure that is generated by displacement synthesis when DNA polymerase encounters the 5'-end of a downstream Okazaki fragment. It enters the flap from the 5'-end and then tracks to cleave the flap base, leaving a nick for ligation. Also involved in the long patch base excision repair (LP-BER) pathway, by cleaving within the apurinic/apyrimidinic (AP) site-terminated flap. Acts as a genome stabilization factor that prevents flaps from equilibrating into structures that lead to duplications and deletions. Also possesses 5'-3' exonuclease activity on nicked or gapped double-stranded DNA, and exhibits RNase H activity. Also involved in replication and repair of rDNA and in repairing mitochondrial DNA. The protein is Flap endonuclease 1 of Drosophila willistoni (Fruit fly).